The sequence spans 629 residues: tRNA uridine 5-carboxymethylaminomethyl modification enzyme MnmG (629 aa).

13–18 (GGGHAG) lines the FAD pocket. 273-287 (GPRYCPSIEDKIMRF) provides a ligand contact to NAD(+).

Belongs to the MnmG family. In terms of assembly, homodimer. Heterotetramer of two MnmE and two MnmG subunits. FAD serves as cofactor.

It is found in the cytoplasm. Functionally, NAD-binding protein involved in the addition of a carboxymethylaminomethyl (cmnm) group at the wobble position (U34) of certain tRNAs, forming tRNA-cmnm(5)s(2)U34. In Tolumonas auensis (strain DSM 9187 / NBRC 110442 / TA 4), this protein is tRNA uridine 5-carboxymethylaminomethyl modification enzyme MnmG.